The following is an 885-amino-acid chain: Alanine--tRNA ligase (885 aa).

Positions 426–444 (QEQKTRARQDRREKQRGGA) are enriched in basic and acidic residues. Residues 426 to 445 (QEQKTRARQDRREKQRGGAE) are disordered. 4 residues coordinate Zn(2+): His-568, His-572, Cys-671, and His-675.

The protein belongs to the class-II aminoacyl-tRNA synthetase family. Zn(2+) serves as cofactor.

The protein resides in the cytoplasm. It carries out the reaction tRNA(Ala) + L-alanine + ATP = L-alanyl-tRNA(Ala) + AMP + diphosphate. Functionally, catalyzes the attachment of alanine to tRNA(Ala) in a two-step reaction: alanine is first activated by ATP to form Ala-AMP and then transferred to the acceptor end of tRNA(Ala). Also edits incorrectly charged Ser-tRNA(Ala) and Gly-tRNA(Ala) via its editing domain. This chain is Alanine--tRNA ligase, found in Chlorobium phaeovibrioides (strain DSM 265 / 1930) (Prosthecochloris vibrioformis (strain DSM 265)).